An 857-amino-acid polypeptide reads, in one-letter code: Dynein regulatory complex protein 11 (857 aa).

The region spanning 206–235 (TKLAALQIQKVWRGFHQCKKTVKEREEEMV) is the IQ domain. The interval 348-388 (EEKLKKKKKKEDKENKGKKGKKEKKEKKEKKVSLKEKAMKD) is disordered. Positions 365 to 375 (KKGKKEKKEKK) are enriched in basic residues. Positions 376–387 (EKKVSLKEKAMK) are enriched in basic and acidic residues. Position 598-605 (598-605 (GPSGVGKK)) interacts with ATP. The segment at 834–857 (SLTVGNKEKEKDKGKKGKRGKKKK) is disordered. Residues 847-857 (GKKGKRGKKKK) show a composition bias toward basic residues.

This sequence belongs to the AAA ATPase family. DRC11 subfamily. As to quaternary structure, component of the nexin-dynein regulatory complex (N-DRC).

The protein localises to the cytoplasm. Its subcellular location is the cytoskeleton. It is found in the flagellum axoneme. In terms of biological role, component of the nexin-dynein regulatory complex (N-DRC), a key regulator of ciliary/flagellar motility which maintains the alignment and integrity of the distal axoneme and regulates microtubule sliding in motile axonemes. This is Dynein regulatory complex protein 11 (Iqca1) from Mus musculus (Mouse).